Consider the following 564-residue polypeptide: ATP-dependent RNA helicase ROK1 (564 aa).

Disordered regions lie at residues 1 to 45 (MDIF…ESQI) and 62 to 87 (EDDR…DGLI). Composition is skewed to basic and acidic residues over residues 13–23 (VKKESGPKAKA), 33–45 (DENH…ESQI), and 62–86 (EDDR…DDGL). The Q motif motif lies at 122 to 150 (DLISRFSFDKRLLNNLIENGFTEPTPIQC). Positions 153–333 (IPVALNNRDV…QSIMMDPVRV (181 aa)) constitute a Helicase ATP-binding domain. 166-173 (GPTGSGKT) is a binding site for ATP. The DEAD box motif lies at 280-283 (DEAD). The Helicase C-terminal domain maps to 344-506 (NIEQKLIFCG…EVSEWMDKMA (163 aa)). Residues 512 to 564 (EKESIKNGKAHKERKQITTVPKMDKAKRRRQQEMIAASKRRKNEELSKKHFSK) form a disordered region. Basic and acidic residues predominate over residues 553-564 (KNEELSKKHFSK).

The protein belongs to the DEAD box helicase family. DDX52/ROK1 subfamily. In terms of assembly, interacts with the U3 snoRNA and is associated with the 90S and 40S pre-ribosomes. This association requires the presence of RRP5. Also interacts with OSH3.

It localises to the nucleus. It is found in the nucleolus. It catalyses the reaction ATP + H2O = ADP + phosphate + H(+). In terms of biological role, ATP-dependent RNA helicase involved in 40S ribosomal subunit biogenesis. Required for the processing and cleavage of 35S pre-rRNA at sites A0, A1, and A2, leading to mature 18S rRNA. May also have a gene-specific regulatory function since it affects nuclear fusion by regulating KAR4 expression and contributes with KEM1 to ISP-1 sensitivity. In Saccharomyces cerevisiae (strain ATCC 204508 / S288c) (Baker's yeast), this protein is ATP-dependent RNA helicase ROK1 (ROK1).